The following is a 135-amino-acid chain: Large ribosomal subunit protein uL16c (135 aa).

The protein belongs to the universal ribosomal protein uL16 family. As to quaternary structure, part of the 50S ribosomal subunit.

It is found in the plastid. The protein localises to the chloroplast. The protein is Large ribosomal subunit protein uL16c of Olimarabidopsis pumila (Dwarf rocket).